Reading from the N-terminus, the 443-residue chain is Protein king tubby (443 aa).

Disordered stretches follow at residues 57-85 and 98-189; these read TNGSPGGITPVAVNTSRNHSNNMRSLSTI and HELE…ESEG. Positions 68-85 are enriched in polar residues; it reads AVNTSRNHSNNMRSLSTI. Over residues 113–128 the composition is skewed to low complexity; that stretch reads QHQQSASHSANSTQSQ. The residue at position 136 (S136) is a Phosphoserine. Over residues 148 to 160 the composition is skewed to low complexity; that stretch reads NRNVAAAAPVRPA. Residues 177 to 186 are compositionally biased toward gly residues; the sequence is NGTGNGTGGE.

The protein belongs to the TUB family.

Its subcellular location is the cytoplasm. It localises to the nucleus. The protein resides in the cell projection. It is found in the cilium membrane. The protein localises to the rhabdomere. This chain is Protein king tubby, found in Drosophila yakuba (Fruit fly).